The following is a 223-amino-acid chain: Nicotinamide/nicotinic acid mononucleotide adenylyltransferase 2 (223 aa).

NAD(+) contacts are provided by serine 11 and phenylalanine 12. Histidine 19 serves as a coordination point for ATP. Tryptophan 87, threonine 90, glycine 116, aspartate 118, leucine 133, tryptophan 134, and arginine 153 together coordinate NAD(+). Residue 190 to 191 (TR) participates in ATP binding.

It belongs to the eukaryotic NMN adenylyltransferase family. A divalent metal cation is required as a cofactor.

The catalysed reaction is beta-nicotinamide D-ribonucleotide + ATP + H(+) = diphosphate + NAD(+). It catalyses the reaction nicotinate beta-D-ribonucleotide + ATP + H(+) = deamido-NAD(+) + diphosphate. It participates in cofactor biosynthesis; NAD(+) biosynthesis; deamido-NAD(+) from nicotinate D-ribonucleotide: step 1/1. Its pathway is cofactor biosynthesis; NAD(+) biosynthesis; NAD(+) from nicotinamide D-ribonucleotide: step 1/1. In terms of biological role, catalyzes the formation of NAD(+) from nicotinamide mononucleotide (NMN) and ATP. Can also use the deamidated form; nicotinic acid mononucleotide (NaMN) as substrate. The polypeptide is Nicotinamide/nicotinic acid mononucleotide adenylyltransferase 2 (Caenorhabditis elegans).